A 268-amino-acid polypeptide reads, in one-letter code: Tryptophan synthase alpha chain (268 aa).

Active-site proton acceptor residues include Glu49 and Asp60.

This sequence belongs to the TrpA family. As to quaternary structure, tetramer of two alpha and two beta chains.

The enzyme catalyses (1S,2R)-1-C-(indol-3-yl)glycerol 3-phosphate + L-serine = D-glyceraldehyde 3-phosphate + L-tryptophan + H2O. It participates in amino-acid biosynthesis; L-tryptophan biosynthesis; L-tryptophan from chorismate: step 5/5. Functionally, the alpha subunit is responsible for the aldol cleavage of indoleglycerol phosphate to indole and glyceraldehyde 3-phosphate. The chain is Tryptophan synthase alpha chain from Vibrio vulnificus (strain YJ016).